Consider the following 486-residue polypeptide: Cardiolipin synthase A (486 aa).

Transmembrane regions (helical) follow at residues 3–23 (TFYT…IAGV) and 38–58 (MAWL…YLSV). 2 PLD phosphodiesterase domains span residues 219–246 (MDLR…VDPR) and 399–426 (EGGL…DMRS). Active-site residues include His224, Lys226, Asp231, His404, Lys406, and Asp411.

This sequence belongs to the phospholipase D family. Cardiolipin synthase subfamily. ClsA sub-subfamily.

Its subcellular location is the cell inner membrane. It catalyses the reaction 2 a 1,2-diacyl-sn-glycero-3-phospho-(1'-sn-glycerol) = a cardiolipin + glycerol. In terms of biological role, catalyzes the reversible phosphatidyl group transfer from one phosphatidylglycerol molecule to another to form cardiolipin (CL) (diphosphatidylglycerol) and glycerol. The chain is Cardiolipin synthase A from Salmonella paratyphi A (strain ATCC 9150 / SARB42).